Reading from the N-terminus, the 648-residue chain is MAQISLTFPDGNARSYDAGITPAEVAADISTSLAKKAISATVDGQHWDLQWPVTQDAAIAIHTMKDEAQANELIRHDLAHIMARAVQEIWPDTKVTIGPVIENGWYYDFDRAEPFTPEDLGTIEKKMKEIINKREPVTTEVWEREKAIQYYTDNNEPYKVELIDSIPGDEPLRMYWHGDWQDLCRGPHLQHTGQVPGDAFKLMSIAGAYWRGDSDRQMLQRIYGVAFTGKEKLKAHLTMLEEAAKRDHRKLGREMNLFHMQEEAPGQVFWHPNGWRIYTTLQDYMRRMQDRDGYVEVNTPQVVDRKLWEKSGHWDKYQENMFIVEVDEDHAREKAVNALKPMNCPCHVQVFNQGLKSYRDLPLRMAEFGSCARYEPSGALHGIMRVRGFTQDDGHIFCTEDQITSETAKFIAFLSKVYADLGFDNWTIKLSTRPEQRIGSDETWDNMEQALGDACKAAGYDYEILEGEGAFYGPKLEFTLTDAIGRNWQCGTLQVDANLPERLEASFIGQDGSKHRPVMLHRATLGSFERFIGILIEEHAGKLPFWLAPRQVVVASITSEADDYVNEVVETLRAAGVRAEADTRNEKINYKVREHSVGKVPVILAVGHREVEERTVSVRRLGEKQTKVESLTNVTEELAKAATPPDLL.

The TGS domain maps to 1–63 (MAQISLTFPD…TQDAAIAIHT (63 aa)). The catalytic stretch occupies residues 247 to 544 (DHRKLGREMN…LIEEHAGKLP (298 aa)). Zn(2+)-binding residues include Cys-344, His-395, and His-521.

Belongs to the class-II aminoacyl-tRNA synthetase family. As to quaternary structure, homodimer. The cofactor is Zn(2+).

It localises to the cytoplasm. The enzyme catalyses tRNA(Thr) + L-threonine + ATP = L-threonyl-tRNA(Thr) + AMP + diphosphate + H(+). Catalyzes the attachment of threonine to tRNA(Thr) in a two-step reaction: L-threonine is first activated by ATP to form Thr-AMP and then transferred to the acceptor end of tRNA(Thr). Also edits incorrectly charged L-seryl-tRNA(Thr). The polypeptide is Threonine--tRNA ligase (Ruegeria sp. (strain TM1040) (Silicibacter sp.)).